The sequence spans 234 residues: Segregation and condensation protein A (234 aa).

The protein belongs to the ScpA family. As to quaternary structure, component of a cohesin-like complex composed of ScpA, ScpB and the Smc homodimer, in which ScpA and ScpB bind to the head domain of Smc. The presence of the three proteins is required for the association of the complex with DNA.

Its subcellular location is the cytoplasm. Its function is as follows. Participates in chromosomal partition during cell division. May act via the formation of a condensin-like complex containing Smc and ScpB that pull DNA away from mid-cell into both cell halves. The polypeptide is Segregation and condensation protein A (Streptococcus pyogenes serotype M5 (strain Manfredo)).